A 668-amino-acid chain; its full sequence is MAP kinase kinase PBS2 (668 aa).

The span at 1-15 shows a compositional bias: basic and acidic residues; the sequence is MEDKFANLSLHEKTG. 3 disordered regions span residues 1–43, 61–120, and 181–313; these read MEDK…SSHY, RALK…ASSK, and NPNR…GSSG. 3 stretches are compositionally biased toward polar residues: residues 16 to 43, 68 to 91, and 104 to 120; these read KSSI…SSHY, SVGS…QQIV, and SKVS…ASSK. Position 68 is a phosphoserine (Ser68). Over residues 239 to 250 the composition is skewed to low complexity; that stretch reads AQQPQQFAPSPS. Position 269 is a phosphoserine (Ser269). Residues 270-300 show a composition bias toward polar residues; it reads NPGSLINGVQSTSTSSSTEGPHDTVGTTPRT. Residues 301–310 show a composition bias toward low complexity; that stretch reads GNSNNSSNSG. The region spanning 360 to 623 is the Protein kinase domain; it reads LEFLDELGHG…YAALTEHPWL (264 aa). ATP contacts are provided by residues 366–374 and Lys389; that span reads LGHGNYGNV. The active-site Proton acceptor is the Asp485. At Ser514 the chain carries Phosphoserine. Thr518 carries the phosphothreonine modification.

The protein belongs to the protein kinase superfamily. STE Ser/Thr protein kinase family. MAP kinase kinase subfamily. As to quaternary structure, interacts with NBP2, PTC1, SHO1 and STE11. Activated by phosphorylation by SSK2 or SSK22. Ser/Thr phosphorylation is also necessary for SHO1-mediated activation.

It localises to the cytoplasm. It catalyses the reaction L-seryl-[protein] + ATP = O-phospho-L-seryl-[protein] + ADP + H(+). It carries out the reaction L-threonyl-[protein] + ATP = O-phospho-L-threonyl-[protein] + ADP + H(+). The catalysed reaction is L-tyrosyl-[protein] + ATP = O-phospho-L-tyrosyl-[protein] + ADP + H(+). Kinase involved in a signal transduction pathway that is activated by changes in the osmolarity of the extracellular environment. Activates the MAP kinase HOG1 by concomitant phosphorylation at 'Thr-174' and 'Tyr-176'. The protein is MAP kinase kinase PBS2 (PBS2) of Saccharomyces cerevisiae (strain ATCC 204508 / S288c) (Baker's yeast).